Consider the following 410-residue polypeptide: Mitochondrial potassium channel (410 aa).

A mitochondrion-targeting transit peptide spans 1–35 (MTGCSPVFTMQQVVGVSHRLVWRTFRGTDLLMTRT). The Mitochondrial matrix portion of the chain corresponds to 36–201 (LCSPGPSRPG…KERTRAERTK (166 aa)). A coiled-coil region spans residues 116-143 (VREAREDLEAQQTKLKEVRDRLDRVSRE). A helical membrane pass occupies residues 202–222 (NWSLIGSVLGALIGVAGSTYV). Over 223-385 (NRVRLQELKA…RLEAQANRNA (163 aa)) the chain is Mitochondrial intermembrane. Residues 276–296 (GQDQGSGSPTGPSSPRGKDID) are disordered. Over residues 280-290 (GSGSPTGPSSP) the composition is skewed to low complexity. A helical transmembrane segment spans residues 386-406 (ISSTLVTCVTFMATLPLLYML). Residues 407-410 (FKTS) are Mitochondrial matrix-facing.

In terms of assembly, the mitochondrial potassium channel (mitoK(ATP)) forms a heteromultimer.

The protein resides in the mitochondrion inner membrane. It carries out the reaction K(+)(in) = K(+)(out). Its activity is regulated as follows. Channel activity inhibited by ATP via ABCB8/MITOSUR subunit. Its function is as follows. Pore-forming subunit of the mitochondrial ATP-gated potassium channel (mitoK(ATP)). Together with ATP-binding subunit ABCB8/MITOSUR of the mitoK(ATP) channel, mediates ATP-dependent K(+) currents across the mitochondrial inner membrane. An increase in ATP intracellular levels closes the channel, inhibiting K(+) transport, whereas a decrease in ATP levels enhances K(+) uptake in the mitochondrial matrix. May contribute to the homeostatic control of cellular metabolism under stress conditions by regulating the mitochondrial matrix volume. The polypeptide is Mitochondrial potassium channel (Rattus norvegicus (Rat)).